A 402-amino-acid polypeptide reads, in one-letter code: Arginine deiminase (402 aa).

The active-site Amidino-cysteine intermediate is cysteine 392.

Belongs to the arginine deiminase family.

It is found in the cytoplasm. The enzyme catalyses L-arginine + H2O = L-citrulline + NH4(+). Its pathway is amino-acid degradation; L-arginine degradation via ADI pathway; carbamoyl phosphate from L-arginine: step 1/2. The protein is Arginine deiminase of Mycolicibacterium gilvum (strain PYR-GCK) (Mycobacterium gilvum (strain PYR-GCK)).